Here is a 1342-residue protein sequence, read N- to C-terminus: DNA-directed RNA polymerase subunit beta (1342 aa).

The protein belongs to the RNA polymerase beta chain family. In terms of assembly, the RNAP catalytic core consists of 2 alpha, 1 beta, 1 beta' and 1 omega subunit. When a sigma factor is associated with the core the holoenzyme is formed, which can initiate transcription.

It catalyses the reaction RNA(n) + a ribonucleoside 5'-triphosphate = RNA(n+1) + diphosphate. DNA-dependent RNA polymerase catalyzes the transcription of DNA into RNA using the four ribonucleoside triphosphates as substrates. The polypeptide is DNA-directed RNA polymerase subunit beta (Salmonella typhimurium (strain LT2 / SGSC1412 / ATCC 700720)).